Consider the following 91-residue polypeptide: Probable Fe(2+)-trafficking protein (91 aa).

The protein belongs to the Fe(2+)-trafficking protein family.

Its function is as follows. Could be a mediator in iron transactions between iron acquisition and iron-requiring processes, such as synthesis and/or repair of Fe-S clusters in biosynthetic enzymes. The polypeptide is Probable Fe(2+)-trafficking protein (Burkholderia mallei (strain NCTC 10247)).